Reading from the N-terminus, the 253-residue chain is TasA anchoring/assembly protein (253 aa).

The first 32 residues, 1-32 (MFRLFHNQQKAKTKLKVLLIFQLSVIFSLTAA), serve as a signal peptide directing secretion. Residues 50-57 (TFDVSLQT) form an important for TasA fiber formation region. Residues 190-241 (EKPTVPKKETKSDVKKENETTQKDIPEKTMKEETSQEAVTKEKETQSDQKES) show a composition bias toward basic and acidic residues. Residues 190 to 253 (EKPTVPKKET…EDEKSNEADQ (64 aa)) are disordered.

It is found in the secreted. Its subcellular location is the cell wall. Its function is as follows. Required for biofilm formation. Required for the proper anchoring and polymerization of TasA amyloid fibers at the cell surface. Is also a minor component of TasA fibers. The polypeptide is TasA anchoring/assembly protein (Bacillus subtilis (strain 168)).